Reading from the N-terminus, the 131-residue chain is Holo-[acyl-carrier-protein] synthase (131 aa).

Mg(2+) contacts are provided by aspartate 8 and glutamate 59.

The protein belongs to the P-Pant transferase superfamily. AcpS family. Mg(2+) is required as a cofactor.

The protein localises to the cytoplasm. It catalyses the reaction apo-[ACP] + CoA = holo-[ACP] + adenosine 3',5'-bisphosphate + H(+). In terms of biological role, transfers the 4'-phosphopantetheine moiety from coenzyme A to a Ser of acyl-carrier-protein. This is Holo-[acyl-carrier-protein] synthase from Rickettsia felis (strain ATCC VR-1525 / URRWXCal2) (Rickettsia azadi).